The following is a 457-amino-acid chain: Toxin and drug export protein A (457 aa).

The first 23 residues, 1-23 (MFTIKKLTLTIVVATTLTGCANI), serve as a signal peptide directing secretion.

The protein belongs to the outer membrane factor (OMF) (TC 1.B.17) family. In terms of assembly, homotrimer. Probably part of a complex composed of LtxB, LtxD and TdeA, which forms a single transport channel across the two membranes.

Its subcellular location is the cell outer membrane. Functionally, required for secretion of the LtxA leukotoxin and resistance to various antimicrobial compounds. The polypeptide is Toxin and drug export protein A (Aggregatibacter actinomycetemcomitans (Actinobacillus actinomycetemcomitans)).